The sequence spans 311 residues: Acetyl-coenzyme A carboxylase carboxyl transferase subunit alpha (311 aa).

In terms of domain architecture, CoA carboxyltransferase C-terminal spans 36-286; it reads NLEKEVAKVY…ASYFVSKLEK (251 aa).

It belongs to the AccA family. In terms of assembly, acetyl-CoA carboxylase is a heterohexamer composed of biotin carboxyl carrier protein (AccB), biotin carboxylase (AccC) and two subunits each of ACCase subunit alpha (AccA) and ACCase subunit beta (AccD).

The protein resides in the cytoplasm. It catalyses the reaction N(6)-carboxybiotinyl-L-lysyl-[protein] + acetyl-CoA = N(6)-biotinyl-L-lysyl-[protein] + malonyl-CoA. It functions in the pathway lipid metabolism; malonyl-CoA biosynthesis; malonyl-CoA from acetyl-CoA: step 1/1. Functionally, component of the acetyl coenzyme A carboxylase (ACC) complex. First, biotin carboxylase catalyzes the carboxylation of biotin on its carrier protein (BCCP) and then the CO(2) group is transferred by the carboxyltransferase to acetyl-CoA to form malonyl-CoA. The protein is Acetyl-coenzyme A carboxylase carboxyl transferase subunit alpha of Campylobacter curvus (strain 525.92).